The following is a 329-amino-acid chain: Legumin type B (329 aa).

Disordered stretches follow at residues 47–79 (PETQEEQQERHQQKHSLPVGRRGGQHQQEEDGN) and 97–149 (EEDT…GRNG). A compositionally biased stretch (basic and acidic residues) spans 99 to 112 (DTAKRLRSPRDKRN). Acidic residues predominate over residues 129 to 138 (QQEEEEEEEE). Positions 161-308 (ENIAQPARAD…AFGLRQRQVT (148 aa)) constitute a Cupin type-1 domain.

This sequence belongs to the 11S seed storage protein (globulins) family. In terms of assembly, hexamer; each subunit is composed of an acidic and a basic chain derived from a single precursor and linked by a disulfide bond.

Its function is as follows. This protein found in the seeds of many leguminous and non-leguminous plants is the source of sulfur-containing amino acids in seed meals. This is Legumin type B (LEB6) from Vicia faba (Broad bean).